Here is a 380-residue protein sequence, read N- to C-terminus: L-lactate dehydrogenase (380 aa).

Positions 1–380 (MIISSASDYR…DASILVKAVA (380 aa)) constitute an FMN hydroxy acid dehydrogenase domain. Tyrosine 24 provides a ligand contact to substrate. FMN contacts are provided by serine 106 and glutamine 127. Substrate is bound at residue tyrosine 129. Threonine 155 is a binding site for FMN. Substrate is bound at residue arginine 164. An FMN-binding site is contributed by lysine 251. The active-site Proton acceptor is the histidine 275. Arginine 278 is a substrate binding site. An FMN-binding site is contributed by 306–330 (DSGIRSGLDVVRMLALGAKGVLLGR).

It belongs to the FMN-dependent alpha-hydroxy acid dehydrogenase family. In terms of assembly, homotetramer. FMN serves as cofactor.

The protein localises to the cell inner membrane. It carries out the reaction (S)-lactate + A = pyruvate + AH2. Its function is as follows. Catalyzes the conversion of L-lactate to pyruvate. Is coupled to the respiratory chain. This Pseudomonas syringae pv. syringae (strain B728a) protein is L-lactate dehydrogenase.